A 143-amino-acid polypeptide reads, in one-letter code: Submaxillary gland androgen-regulated protein 2, isoform gamma (143 aa).

Residues 1–22 (MKALYMVFVLWVLIGCFLSSEC) form the signal peptide. Residues 28–50 (GQHDPTRPLSPSNPSSHFYPQPD) are disordered. Polar residues predominate over residues 36–45 (LSPSNPSSHF).

It localises to the secreted. Its function is as follows. May play a role in protection or detoxification. The polypeptide is Submaxillary gland androgen-regulated protein 2, isoform gamma (Smr2) (Mus musculus (Mouse)).